Consider the following 370-residue polypeptide: Queuine tRNA-ribosyltransferase (370 aa).

Residue D93 is the Proton acceptor of the active site. Residues 93 to 97 (DSGGF), D147, Q189, and G216 each bind substrate. The interval 247 to 253 (GVGSPDC) is RNA binding. Catalysis depends on D266, which acts as the Nucleophile. Residues 271–275 (TRIAR) form an RNA binding; important for wobble base 34 recognition region. Zn(2+)-binding residues include C304, C306, C309, and H335.

It belongs to the queuine tRNA-ribosyltransferase family. As to quaternary structure, homodimer. Within each dimer, one monomer is responsible for RNA recognition and catalysis, while the other monomer binds to the replacement base PreQ1. Requires Zn(2+) as cofactor.

The catalysed reaction is 7-aminomethyl-7-carbaguanine + guanosine(34) in tRNA = 7-aminomethyl-7-carbaguanosine(34) in tRNA + guanine. It functions in the pathway tRNA modification; tRNA-queuosine biosynthesis. Its function is as follows. Catalyzes the base-exchange of a guanine (G) residue with the queuine precursor 7-aminomethyl-7-deazaguanine (PreQ1) at position 34 (anticodon wobble position) in tRNAs with GU(N) anticodons (tRNA-Asp, -Asn, -His and -Tyr). Catalysis occurs through a double-displacement mechanism. The nucleophile active site attacks the C1' of nucleotide 34 to detach the guanine base from the RNA, forming a covalent enzyme-RNA intermediate. The proton acceptor active site deprotonates the incoming PreQ1, allowing a nucleophilic attack on the C1' of the ribose to form the product. After dissociation, two additional enzymatic reactions on the tRNA convert PreQ1 to queuine (Q), resulting in the hypermodified nucleoside queuosine (7-(((4,5-cis-dihydroxy-2-cyclopenten-1-yl)amino)methyl)-7-deazaguanosine). The chain is Queuine tRNA-ribosyltransferase from Desulforamulus reducens (strain ATCC BAA-1160 / DSM 100696 / MI-1) (Desulfotomaculum reducens).